Consider the following 446-residue polypeptide: 3-phosphoshikimate 1-carboxyvinyltransferase (446 aa).

3-phosphoshikimate contacts are provided by Lys21, Ser22, and Arg26. Lys21 provides a ligand contact to phosphoenolpyruvate. Phosphoenolpyruvate-binding residues include Gly92 and Arg120. Ser165, Gln166, Asp308, and Lys335 together coordinate 3-phosphoshikimate. Gln166 serves as a coordination point for phosphoenolpyruvate. Residue Asp308 is the Proton acceptor of the active site. Phosphoenolpyruvate is bound by residues Arg339, Arg380, and Lys406.

Belongs to the EPSP synthase family. As to quaternary structure, monomer.

The protein resides in the cytoplasm. The enzyme catalyses 3-phosphoshikimate + phosphoenolpyruvate = 5-O-(1-carboxyvinyl)-3-phosphoshikimate + phosphate. It participates in metabolic intermediate biosynthesis; chorismate biosynthesis; chorismate from D-erythrose 4-phosphate and phosphoenolpyruvate: step 6/7. Its function is as follows. Catalyzes the transfer of the enolpyruvyl moiety of phosphoenolpyruvate (PEP) to the 5-hydroxyl of shikimate-3-phosphate (S3P) to produce enolpyruvyl shikimate-3-phosphate and inorganic phosphate. The protein is 3-phosphoshikimate 1-carboxyvinyltransferase of Chlamydia caviae (strain ATCC VR-813 / DSM 19441 / 03DC25 / GPIC) (Chlamydophila caviae).